Consider the following 360-residue polypeptide: Membrane-bound lytic murein transglycosylase C (360 aa).

An N-terminal signal peptide occupies residues 1–16; the sequence is MKKLLALAVIAPLLIS. Cys-17 is lipidated: N-palmitoyl cysteine. Cys-17 carries S-diacylglycerol cysteine lipidation.

It belongs to the transglycosylase Slt family.

Its subcellular location is the cell outer membrane. It carries out the reaction Exolytic cleavage of the (1-&gt;4)-beta-glycosidic linkage between N-acetylmuramic acid (MurNAc) and N-acetylglucosamine (GlcNAc) residues in peptidoglycan, from either the reducing or the non-reducing ends of the peptidoglycan chains, with concomitant formation of a 1,6-anhydrobond in the MurNAc residue.. Murein-degrading enzyme. May play a role in recycling of muropeptides during cell elongation and/or cell division. This Salmonella paratyphi A (strain ATCC 9150 / SARB42) protein is Membrane-bound lytic murein transglycosylase C.